The chain runs to 1067 residues: Sal-like protein 4 (1067 aa).

Residues 1 to 62 (MSRRKQAKPQ…SEDSIPVKRP (62 aa)) form a disordered region. The segment covering 15–42 (EEGQGEQPQQLPSPDLAEALAAEEPGAP) has biased composition (low complexity). A Phosphoserine modification is found at Ser-53. Residues 68–90 (HICNKCCAEFFSLSEFMEHKKSC) form a C2H2-type 1; atypical zinc finger. Positions 115–140 (ALSHQLGSPSNKDSLQENGSSSGDLK) are disordered. Residues 119–137 (QLGSPSNKDSLQENGSSSG) show a composition bias toward polar residues. Residue Lys-151 forms a Glycyl lysine isopeptide (Lys-Gly) (interchain with G-Cter in SUMO1); alternate linkage. Residue Lys-151 forms a Glycyl lysine isopeptide (Lys-Gly) (interchain with G-Cter in SUMO2); alternate linkage. Residues Lys-170, Lys-185, and Lys-291 each participate in a glycyl lysine isopeptide (Lys-Gly) (interchain with G-Cter in SUMO2) cross-link. Phosphoserine is present on Ser-308. Lys-317 participates in a covalent cross-link: Glycyl lysine isopeptide (Lys-Gly) (interchain with G-Cter in SUMO1); alternate. Lys-317 is covalently cross-linked (Glycyl lysine isopeptide (Lys-Gly) (interchain with G-Cter in SUMO2); alternate). Lys-377 is covalently cross-linked (Glycyl lysine isopeptide (Lys-Gly) (interchain with G-Cter in SUMO2)). A Glycyl lysine isopeptide (Lys-Gly) (interchain with G-Cter in SUMO1); alternate cross-link involves residue Lys-379. A Glycyl lysine isopeptide (Lys-Gly) (interchain with G-Cter in SUMO2); alternate cross-link involves residue Lys-379. 2 C2H2-type zinc fingers span residues 387–409 (HKCR…LRSH) and 415–437 (YVCP…LQRH). Lys-441 is covalently cross-linked (Glycyl lysine isopeptide (Lys-Gly) (interchain with G-Cter in SUMO2)). Residues 471 to 521 (DESSLSVDAEPVPVTGTPSLGLPQKLTSGPNSRDLMGGSLPNDMQPGPSPE) form a disordered region. Residue Lys-557 forms a Glycyl lysine isopeptide (Lys-Gly) (interchain with G-Cter in SUMO2) linkage. 2 consecutive C2H2-type zinc fingers follow at residues 573 to 595 (NECL…YRTH) and 601 to 623 (FQCK…LGVH). Residues Lys-604 and Lys-630 each participate in a glycyl lysine isopeptide (Lys-Gly) (interchain with G-Cter in SUMO2) cross-link. Residues 633-655 (HSCPICQKKFTNAVMLQQHIRMH) form a C2H2-type 6 zinc finger. Disordered regions lie at residues 682–716 (ENGS…STVS) and 752–835 (RQSS…SLPP). A compositionally biased stretch (acidic residues) spans 693–704 (DAAEGMEAEEVC). Polar residues-rich tracts occupy residues 707–716 (DVPSGPSTVS) and 752–761 (RQSSRENSSL). Phosphoserine occurs at positions 785 and 798. Residues 798 to 809 (SPANSQAGSVKS) show a composition bias toward polar residues. The segment covering 810–829 (RSPEGHKAEGVESCRVDTEG) has biased composition (basic and acidic residues). A Glycyl lysine isopeptide (Lys-Gly) (interchain with G-Cter in SUMO1); alternate cross-link involves residue Lys-846. Lys-846 is covalently cross-linked (Glycyl lysine isopeptide (Lys-Gly) (interchain with G-Cter in SUMO2); alternate). The segment at 880 to 902 (HCCTRCGKNFSSASALQIHERTH) adopts a C2H2-type 7 zinc-finger fold. A Glycyl lysine isopeptide (Lys-Gly) (interchain with G-Cter in SUMO2) cross-link involves residue Lys-906. The C2H2-type 8 zinc-finger motif lies at 908–930 (FVCNICGRAFTTKGNLKVHYMTH). Residues Lys-942 and Lys-957 each participate in a glycyl lysine isopeptide (Lys-Gly) (interchain with G-Cter in SUMO2) cross-link. A Phosphoserine modification is found at Ser-1029.

This sequence belongs to the sal C2H2-type zinc-finger protein family. Interacts with POU5F1/OCT4. Interacts with NANOG. Interacts with BEND3. Interacts with NSD2 (via PHD-type zinc fingers 1, 2 and 3). Interacts with NRBP1. Post-translationally, sumoylation with both SUMO1 and SUMO2 regulates the stability, subcellular localization, transcriptional activity, and may reduce interaction with POU5F1/OCT4.

It localises to the cytoplasm. The protein localises to the nucleus. In terms of biological role, transcription factor with a key role in the maintenance and self-renewal of embryonic and hematopoietic stem cells. This chain is Sal-like protein 4 (Sall4), found in Mus musculus (Mouse).